Consider the following 616-residue polypeptide: Chaperone protein HscA (616 aa).

This sequence belongs to the heat shock protein 70 family.

Its function is as follows. Chaperone involved in the maturation of iron-sulfur cluster-containing proteins. Has a low intrinsic ATPase activity which is markedly stimulated by HscB. Involved in the maturation of IscU. The polypeptide is Chaperone protein HscA (Proteus mirabilis (strain HI4320)).